The chain runs to 319 residues: uncharacterized protein (319 aa).

The next 9 helical transmembrane spans lie at 11–31 (GLWA…LGVF), 43–63 (ALGW…GVWW), 83–103 (LSVD…IPAL), 108–128 (VLFW…FAGV), 134–154 (FHWL…KLFL), 195–215 (LATP…LFAL), 220–240 (AIFA…FAIL), 260–280 (KVGL…IDFV), and 284–304 (PEVS…ASLI).

The protein belongs to the TerC family.

Its subcellular location is the cell membrane. This is an uncharacterized protein from Myxococcus xanthus.